We begin with the raw amino-acid sequence, 261 residues long: Small ribosomal subunit protein mS23 (261 aa).

The disordered stretch occupies residues 234–261 (NPSESWATDEKDPKKNDDIEEDVEEIKL). The segment covering 241-250 (TDEKDPKKND) has biased composition (basic and acidic residues). Positions 251-261 (DIEEDVEEIKL) are enriched in acidic residues.

It belongs to the mitochondrion-specific ribosomal protein mS23 family. Component of the mitochondrial small ribosomal subunit.

Its subcellular location is the mitochondrion. This Vanderwaltozyma polyspora (strain ATCC 22028 / DSM 70294 / BCRC 21397 / CBS 2163 / NBRC 10782 / NRRL Y-8283 / UCD 57-17) (Kluyveromyces polysporus) protein is Small ribosomal subunit protein mS23 (RSM25).